A 163-amino-acid polypeptide reads, in one-letter code: Transcription elongation factor GreA (163 aa).

A coiled-coil region spans residues 12 to 73; it reads YEKIQKEFEA…ELSDLLARAQ (62 aa).

Belongs to the GreA/GreB family.

Necessary for efficient RNA polymerase transcription elongation past template-encoded arresting sites. The arresting sites in DNA have the property of trapping a certain fraction of elongating RNA polymerases that pass through, resulting in locked ternary complexes. Cleavage of the nascent transcript by cleavage factors such as GreA or GreB allows the resumption of elongation from the new 3'terminus. GreA releases sequences of 2 to 3 nucleotides. In Nitratiruptor sp. (strain SB155-2), this protein is Transcription elongation factor GreA.